Consider the following 44-residue polypeptide: Photosystem I reaction center subunit IX (44 aa).

Residues 7–27 (YLSVAPVLSTLWFGSLAGLLI) traverse the membrane as a helical segment.

It belongs to the PsaJ family.

It localises to the plastid. The protein resides in the chloroplast thylakoid membrane. In terms of biological role, may help in the organization of the PsaE and PsaF subunits. The sequence is that of Photosystem I reaction center subunit IX from Arabis hirsuta (Hairy rock-cress).